The sequence spans 368 residues: 3-dehydroquinate synthase (368 aa).

NAD(+) is bound by residues 99–103 (GVVGD), 123–124 (TT), Lys-136, and Lys-145. Positions 178, 242, and 259 each coordinate Zn(2+).

Belongs to the sugar phosphate cyclases superfamily. Dehydroquinate synthase family. It depends on NAD(+) as a cofactor. Co(2+) serves as cofactor. Requires Zn(2+) as cofactor.

It localises to the cytoplasm. The enzyme catalyses 7-phospho-2-dehydro-3-deoxy-D-arabino-heptonate = 3-dehydroquinate + phosphate. Its pathway is metabolic intermediate biosynthesis; chorismate biosynthesis; chorismate from D-erythrose 4-phosphate and phosphoenolpyruvate: step 2/7. In terms of biological role, catalyzes the conversion of 3-deoxy-D-arabino-heptulosonate 7-phosphate (DAHP) to dehydroquinate (DHQ). This is 3-dehydroquinate synthase from Chlorobaculum tepidum (strain ATCC 49652 / DSM 12025 / NBRC 103806 / TLS) (Chlorobium tepidum).